The primary structure comprises 217 residues: UPF0711 protein C18orf21 homolog (217 aa).

Ser-126 bears the Phosphoserine mark. Residues Thr-130 and Thr-139 each carry the phosphothreonine modification. Residues 131 to 190 (AANKASPKTPKRTAPGSANLGQSTNGSKGKSPSLTIRTPTSGQSTPICSSRNGSKRKKHF) are disordered. The span at 149–182 (NLGQSTNGSKGKSPSLTIRTPTSGQSTPICSSRN) shows a compositional bias: polar residues.

Belongs to the UPF0711 family.

This is UPF0711 protein C18orf21 homolog from Mus musculus (Mouse).